Reading from the N-terminus, the 328-residue chain is 3-dehydroquinate synthase (328 aa).

Belongs to the archaeal-type DHQ synthase family.

It catalyses the reaction 2-amino-2,3,7-trideoxy-D-lyxo-hept-6-ulosonate + NAD(+) + H2O = 3-dehydroquinate + NH4(+) + NADH + H(+). In terms of biological role, catalyzes the oxidative deamination and cyclization of 2-amino-3,7-dideoxy-D-threo-hept-6-ulosonic acid (ADH) to yield 3-dehydroquinate (DHQ), which is fed into the canonical shikimic pathway of aromatic amino acid biosynthesis. The sequence is that of 3-dehydroquinate synthase from Methanoculleus marisnigri (strain ATCC 35101 / DSM 1498 / JR1).